The following is an 87-amino-acid chain: MKNFETLFAELSEKAATRPAGSRTVAELDSGIHGIGKKVVEEAAEVWMAAEYESDEAAAEEISQLLYHLQVLMLAKGLSLEDVYKHL.

Belongs to the PRA-PH family.

The protein resides in the cytoplasm. It carries out the reaction 1-(5-phospho-beta-D-ribosyl)-ATP + H2O = 1-(5-phospho-beta-D-ribosyl)-5'-AMP + diphosphate + H(+). It participates in amino-acid biosynthesis; L-histidine biosynthesis; L-histidine from 5-phospho-alpha-D-ribose 1-diphosphate: step 2/9. The protein is Phosphoribosyl-ATP pyrophosphatase of Paenarthrobacter aurescens (strain TC1).